We begin with the raw amino-acid sequence, 317 residues long: Succinate receptor 1 (317 aa).

Over 1-27 (MAQNLSCENWLALENILKKYYLSAFYG) the chain is Extracellular. N-linked (GlcNAc...) asparagine glycosylation occurs at Asn4. Residues 28 to 48 (IEFIVGMLGNFTVVFGYLFCM) form a helical membrane-spanning segment. The Cytoplasmic portion of the chain corresponds to 49–55 (KNWNSSN). A helical transmembrane segment spans residues 56-76 (VYLFNLSISDLAFLCTLPMLI). Residues 77 to 99 (RSYATGNWTYGDVLCISNRYVLH) are Extracellular-facing. Cys91 and Cys168 are oxidised to a cystine. A helical membrane pass occupies residues 100 to 120 (ANLYTSILFLTFISIDRYLLM). Topologically, residues 121–133 (KFPFREHILQKKE) are cytoplasmic. Residues 134–154 (FAILISLAVWVLVTLEVLPML) form a helical membrane-spanning segment. The Extracellular portion of the chain corresponds to 155–181 (TFITSTPIEKGDSCVDYASSGNPKYSL). A helical membrane pass occupies residues 182–202 (IYSLCLTLLGFLIPLSVMCFF). Topologically, residues 203 to 226 (YYKMVVFLKKRSQQQATVLSLNKP) are cytoplasmic. A helical transmembrane segment spans residues 227 to 247 (LRLVVLAVVIFSVLFTPYHIM). Topologically, residues 248 to 276 (RNVRIASRLDSWPQGCSQKAIKCLYILTR) are extracellular. A helical membrane pass occupies residues 277 to 297 (PLAFLNSAVNPIFYFLVGDHF). Over 298-317 (RDMLFSKLRQYFKSLTSFRL) the chain is Cytoplasmic.

This sequence belongs to the G-protein coupled receptor 1 family. As to expression, expressed in retina.

It is found in the cell membrane. Its function is as follows. G protein-coupled receptor for succinate able to mediate signaling through Gq/GNAQ or Gi/GNAI second messengers depending on the cell type and the processes regulated. Succinate-SUCNR1 signaling serves as a link between metabolic stress, inflammation and energy homeostasisn. In macrophages, plays a range of immune-regulatory roles. During inflammation, succinate-SUCNR1 signaling may act as an anti-inflammatory mediator or boost inflammation depending on the inflammatory status of cells. Hyperpolarizes M2 macrophages versus M1 phenotype through Gq signaling by regulating the transcription of genes involved in immune function. In activated M1 macrophages, plays a pro-inflammatory role in response to LPS. Expressed in dendritic cells, where it is involved in the sensing of immunological danger and enhances immunity. Mediates succinate triggered intracelleular calcium mobilization, induces migratory responses and acts in synergy with Toll-like receptor ligands for the production of proinflammatory cytokines as well as an enhancement of antigen-specific activation of helper T cells. In the small intestine, mediates the activation of tuft cells by dietary succinate and triggers type 2 immunity. In adipocytes, plays an important role in the control of energy metabolism. In response to succinate, controls leptin expression in an AMPK-JNK-CEBPA-dependent as well as circadian clock-regulated manner. In muscle tissue, is expressed in non-muscle cells and coordinates muscle remodeling in response to the succinate produced during exercise training in a paracrine manner. In retina, acts as a mediator of vessel growth during retinal development. In response to succinate, regulates the production of angiogenic factors, including VEGF, by retinal ganglion neurons. This is Succinate receptor 1 (Sucnr1) from Rattus norvegicus (Rat).